The sequence spans 653 residues: tRNA uridine 5-carboxymethylaminomethyl modification enzyme MnmG (653 aa).

Residues 18-23 (GAGHAG), valine 130, and threonine 195 each bind FAD. 287–301 (GPRYCPSIEDKVVRF) provides a ligand contact to NAD(+). Position 384 (glutamine 384) interacts with FAD. The interval 624-653 (SQTKSSASVDKRASSDNESSRPTSSASDSL) is disordered. Positions 632 to 642 (VDKRASSDNES) are enriched in basic and acidic residues. Polar residues predominate over residues 643-653 (SRPTSSASDSL).

Belongs to the MnmG family. As to quaternary structure, homodimer. Heterotetramer of two MnmE and two MnmG subunits. The cofactor is FAD.

The protein localises to the cytoplasm. Its function is as follows. NAD-binding protein involved in the addition of a carboxymethylaminomethyl (cmnm) group at the wobble position (U34) of certain tRNAs, forming tRNA-cmnm(5)s(2)U34. The protein is tRNA uridine 5-carboxymethylaminomethyl modification enzyme MnmG of Rhodopirellula baltica (strain DSM 10527 / NCIMB 13988 / SH1).